The following is a 352-amino-acid chain: Elongation factor Ts (352 aa).

The tract at residues 81-84 (TDFV) is involved in Mg(2+) ion dislocation from EF-Tu.

It belongs to the EF-Ts family.

The protein localises to the cytoplasm. In terms of biological role, associates with the EF-Tu.GDP complex and induces the exchange of GDP to GTP. It remains bound to the aminoacyl-tRNA.EF-Tu.GTP complex up to the GTP hydrolysis stage on the ribosome. In Campylobacter hominis (strain ATCC BAA-381 / DSM 21671 / CCUG 45161 / LMG 19568 / NCTC 13146 / CH001A), this protein is Elongation factor Ts.